Reading from the N-terminus, the 203-residue chain is Probable chemoreceptor glutamine deamidase CheD (203 aa).

It belongs to the CheD family.

It carries out the reaction L-glutaminyl-[protein] + H2O = L-glutamyl-[protein] + NH4(+). Its function is as follows. Probably deamidates glutamine residues to glutamate on methyl-accepting chemotaxis receptors (MCPs), playing an important role in chemotaxis. The sequence is that of Probable chemoreceptor glutamine deamidase CheD from Janthinobacterium sp. (strain Marseille) (Minibacterium massiliensis).